The primary structure comprises 80 residues: WAP four-disulfide core domain protein 15A (80 aa).

Residues 1 to 20 (MKPSSLLLFTTTILLCLSMA) form the signal peptide. A WAP domain is found at 29 to 76 (VTPKQGYCPEFLLDCPFVLLPVCSRDKGCKGTKKCCFYYCQMRCVEPW). Cystine bridges form between Cys36/Cys64, Cys43/Cys68, Cys51/Cys63, and Cys57/Cys72.

The protein resides in the secreted. Antibacterial protein. The polypeptide is WAP four-disulfide core domain protein 15A (Mus musculus (Mouse)).